Reading from the N-terminus, the 335-residue chain is Methyltransferase pgmE (335 aa).

This sequence belongs to the methyltransferase superfamily.

It functions in the pathway pigment biosynthesis. Its pathway is secondary metabolite biosynthesis. Functionally, methyltransferase; part of the gene cluster that mediates the biosynthesis of pleosporalin A, ascomycone A, as well as a third cryptic naphthoquinone derived pigment, all responsible for the coloration of conidia. Essential for the production of pleosporalin A, but not the 2 other final products. The pathway begins with the biosynthesis of the cyclized heptaketide 3-acetonyl-1,6,8-trihydroxy-2-naphthaldehyde by the NR-PKS pgmA. The C-6 hydroxyl group is further methylated by the O-methyltransferase pgmB to yield fusarubinaldehyde which is in turn oxidized by the cytochrome P450 monooxygenase pgmC at C-9. The C-1 hydroxyl group is then methylated spontaneously. Although pgmE, pgmD and pgmH are essential for the production of pleosporalin A, it is not the case for the 2 other final products and it remains difficult to assign a specific function to each enzyme. PgmF and pgmG seem not to be involved in pigment biosynthesis although they were regulated by the cluster-specific transcription factor pgmR. The chain is Methyltransferase pgmE from Aspergillus terreus.